The following is a 151-amino-acid chain: Large ribosomal subunit protein bL9 (151 aa).

Belongs to the bacterial ribosomal protein bL9 family.

Its function is as follows. Binds to the 23S rRNA. The chain is Large ribosomal subunit protein bL9 from Chloroherpeton thalassium (strain ATCC 35110 / GB-78).